A 159-amino-acid chain; its full sequence is Large ribosomal subunit protein uL22 (159 aa).

It belongs to the universal ribosomal protein uL22 family. Part of the 50S ribosomal subunit.

In terms of biological role, this protein binds specifically to 23S rRNA. It makes multiple contacts with different domains of the 23S rRNA in the assembled 50S subunit and ribosome. Functionally, the globular domain of the protein is located near the polypeptide exit tunnel on the outside of the subunit, while an extended beta-hairpin is found that lines the wall of the exit tunnel in the center of the 70S ribosome. In Ignicoccus hospitalis (strain KIN4/I / DSM 18386 / JCM 14125), this protein is Large ribosomal subunit protein uL22.